Here is a 341-residue protein sequence, read N- to C-terminus: MDYKNSGVDIEAGYKSVELMKKHVKETMRPEVLGGLGGFSGAFSLASIKDMEDPVLLSGTDGCGTKVKLAFIMDKHDTIGIDAVAMCVNDVACAGGEPLFFLDYIACGKNYPEKIATIVSGVAEGCKQSGCALVGGETAEHPGLMPEDEYDLAGFAVGVVDRKDIITGEGLKDGDVLIGMASTGVHSNGFSLVRKIFKMDKETLNTYHEELGTTLGEALLAPTRIYVKALKAVKDAGVTVKACSHITGGGFYENIPRMLIDGKRAVVEKNSYPVPPIFKMMAREGNVEEQMMYNTYNMGLGMIVAVDPADVDKTMEAMKSAGDTPYVVGKIIDGEKGVDLV.

It belongs to the AIR synthase family.

Its subcellular location is the cytoplasm. The enzyme catalyses 2-formamido-N(1)-(5-O-phospho-beta-D-ribosyl)acetamidine + ATP = 5-amino-1-(5-phospho-beta-D-ribosyl)imidazole + ADP + phosphate + H(+). The protein operates within purine metabolism; IMP biosynthesis via de novo pathway; 5-amino-1-(5-phospho-D-ribosyl)imidazole from N(2)-formyl-N(1)-(5-phospho-D-ribosyl)glycinamide: step 2/2. This is Phosphoribosylformylglycinamidine cyclo-ligase from Agathobacter rectalis (strain ATCC 33656 / DSM 3377 / JCM 17463 / KCTC 5835 / VPI 0990) (Eubacterium rectale).